We begin with the raw amino-acid sequence, 350 residues long: Heat-inducible transcription repressor HrcA (350 aa).

Belongs to the HrcA family.

Functionally, negative regulator of class I heat shock genes (grpE-dnaK-dnaJ and groELS operons). Prevents heat-shock induction of these operons. The chain is Heat-inducible transcription repressor HrcA from Xanthomonas oryzae pv. oryzae (strain KACC10331 / KXO85).